We begin with the raw amino-acid sequence, 176 residues long: Ubiquitin-conjugating enzyme E2-20 kDa (176 aa).

Polar residues predominate over residues 1–20 (MDSDMQNQNPHTNSKNSSSA). The tract at residues 1–25 (MDSDMQNQNPHTNSKNSSSAGMAVD) is disordered. Positions 28–175 (SVTKRLRSEL…LMQRYKEIDE (148 aa)) constitute a UBC core domain. The Glycyl thioester intermediate role is filled by Cys113.

This sequence belongs to the ubiquitin-conjugating enzyme family.

It carries out the reaction S-ubiquitinyl-[E1 ubiquitin-activating enzyme]-L-cysteine + [E2 ubiquitin-conjugating enzyme]-L-cysteine = [E1 ubiquitin-activating enzyme]-L-cysteine + S-ubiquitinyl-[E2 ubiquitin-conjugating enzyme]-L-cysteine.. Its pathway is protein modification; protein ubiquitination. Functionally, catalyzes the covalent attachment of ubiquitin to other proteins. The chain is Ubiquitin-conjugating enzyme E2-20 kDa (ubc11) from Schizosaccharomyces pombe (strain 972 / ATCC 24843) (Fission yeast).